A 165-amino-acid polypeptide reads, in one-letter code: MALGLEDKKAIVAEVNEAAKGALSAVVADSRGVTVGDMTGLRKAAREAGVYVKVVRNTLVKRAVAGTDFECLADTFTGPTLIAFSNEHPGAAARLLKDFAKEQEKFEIKAAAFEGELIPADNIDRLAKLPTYEEALAQFMMTLKEASAGKLVRTLAALRDQKEAA.

It belongs to the universal ribosomal protein uL10 family. As to quaternary structure, part of the ribosomal stalk of the 50S ribosomal subunit. The N-terminus interacts with L11 and the large rRNA to form the base of the stalk. The C-terminus forms an elongated spine to which L12 dimers bind in a sequential fashion forming a multimeric L10(L12)X complex.

In terms of biological role, forms part of the ribosomal stalk, playing a central role in the interaction of the ribosome with GTP-bound translation factors. This Shewanella piezotolerans (strain WP3 / JCM 13877) protein is Large ribosomal subunit protein uL10.